A 102-amino-acid chain; its full sequence is Small ribosomal subunit protein bS6 (102 aa).

This sequence belongs to the bacterial ribosomal protein bS6 family.

In terms of biological role, binds together with bS18 to 16S ribosomal RNA. In Deinococcus deserti (strain DSM 17065 / CIP 109153 / LMG 22923 / VCD115), this protein is Small ribosomal subunit protein bS6.